The sequence spans 318 residues: Geranylfarnesyl diphosphate synthase (318 aa).

Isopentenyl diphosphate is bound by residues lysine 31, arginine 34, and histidine 65. Mg(2+) contacts are provided by aspartate 72 and aspartate 76. Arginine 81 lines the an all-trans-polyprenyl diphosphate pocket. Arginine 82 lines the isopentenyl diphosphate pocket. Lysine 166, threonine 167, and glutamine 204 together coordinate an all-trans-polyprenyl diphosphate.

The protein belongs to the FPP/GGPP synthase family. As to quaternary structure, homodimer. The cofactor is Mg(2+).

It catalyses the reaction isopentenyl diphosphate + (2E,6E,10E)-geranylgeranyl diphosphate = (2E,6E,10E,14E)-geranylfarnesyl diphosphate + diphosphate. Functionally, probably involved in biosynthesis of the precursor for C25 (sesterterpanyl chain) moiety of C25-C25 diether (2,3-di-O-sesterterpanyl-sn-glycero) membrane lipid. Catalyzes the condensation of isopentenyl pyrophosphate with the allylic pyrophosphates to yield all-trans geranylfarnesyl diphosphate (GFPP). Geranylgeranyl diphosphate (GGPP) is the preferred substrate, however methylallyl diphosphate (DMAPP), farnesyl diphosphate (FPP) and geranyl diphosphate (GPP) can also be used as allylic substrate. The protein is Geranylfarnesyl diphosphate synthase (fgs) of Aeropyrum pernix.